Consider the following 355-residue polypeptide: C-C chemokine receptor type 1 (355 aa).

The Extracellular portion of the chain corresponds to 1–34 (MEISDFTEAYPTTTEFDYGDSTPCQKTAVRAFGA). Residues 35–60 (GLLPPLYSLVFIIGVVGNVLVILVLM) form a helical membrane-spanning segment. Residues 61 to 64 (QHRR) lie on the Cytoplasmic side of the membrane. A helical transmembrane segment spans residues 65–91 (LQSMTSIYLFNLAVSDLVFLFTLPFWI). Over 92-107 (DYKLKDDWIFGDAMCK) the chain is Extracellular. Cys106 and Cys183 form a disulfide bridge. A helical membrane pass occupies residues 108–129 (LLSGFYYLGLYSEIFFIILLTI). Residues 130–146 (DRYLAIVHAVFALRART) lie on the Cytoplasmic side of the membrane. The helical transmembrane segment at 147-171 (VTFGIITSIITWALAILASMPALYF) threads the bilayer. Topologically, residues 172–197 (FKAQWEFTHRTCSPHFPYKSLKQWKR) are extracellular. The chain crosses the membrane as a helical span at residues 198–223 (FQALKLNLLGLILPLLVMIICYAGII). The Cytoplasmic portion of the chain corresponds to 224-239 (RILLRRPSEKKVKAVR). The helical transmembrane segment at 240–264 (LIFAITLLFFLLWTPYNLSVFVSAF) threads the bilayer. Residues 265–281 (QDVLFTNQCEQSKQLDL) are Extracellular-facing. A helical transmembrane segment spans residues 282–305 (AMQVTEVIAYTHCCVNPIIYVFVG). The Cytoplasmic segment spans residues 306–355 (ERFWKYLRQLFQRHVAIPLAKWLPFLSVDQLERTSSISPSTGEHELSAGF).

Belongs to the G-protein coupled receptor 1 family. As to quaternary structure, interacts with CREB3. Interacts with CCL3. Interacts with CCL15. Interacts with CCL23. Interacts with GNAI1. Interacts with PF4/CXCL4. As to expression, detected in the heart, spleen, lung, peritoneal exudate cells and leukocytes.

It is found in the cell membrane. Functionally, chemokine receptor that plays a crucial role in regulating immune cell migration, inflammation, and immune responses. Contributes to the inflammatory response by recruiting immune cells, such as monocytes, macrophages, T-cells, and dendritic cells, to sites of inflammation for the clearance of pathogens and the resolution of tissue damage. When activated by its ligands including CCL3, CCL5-9, CCL13-16 and CCL23, triggers a signaling cascade within immune cells, leading to their migration towards the source of the chemokine. For example, mediates neutrophil migration after activation by CCL3 leading to the sequential release of TNF-alpha and leukotriene B4. Also mediates monocyte migration upon CXCL4 binding. Activation by CCL5 results in neuroinflammation through the ERK1/2 signaling pathway. The chain is C-C chemokine receptor type 1 (Ccr1) from Mus musculus (Mouse).